The primary structure comprises 367 residues: Teichoic acid glycerol-phosphate primase (367 aa).

The protein belongs to the CDP-glycerol glycerophosphotransferase family.

The protein localises to the cell membrane. It carries out the reaction N-acetyl-beta-D-mannosaminyl-(1-&gt;4)-N-acetyl-alpha-D-glucosaminyl di-trans,octa-cis-undecaprenyl diphosphate + CDP-glycerol = 4-O-[(2R)-glycerylphospho]-N-acetyl-beta-D-mannosaminyl-(1-&gt;4)-N-acetyl-alpha-D-glucosaminyl di-trans,octa-cis-undecaprenyl diphosphate + CMP + H(+). Its pathway is cell wall biogenesis; poly(ribitol phosphate) teichoic acid biosynthesis. Catalyzes the addition of a single glycerol phosphate residue to the prenoldiphosphate-linked disaccharide. The sequence is that of Teichoic acid glycerol-phosphate primase (tarB) from Staphylococcus aureus (strain NCTC 8325 / PS 47).